The sequence spans 248 residues: 3-deoxy-manno-octulosonate cytidylyltransferase (248 aa).

This sequence belongs to the KdsB family.

The protein localises to the cytoplasm. It carries out the reaction 3-deoxy-alpha-D-manno-oct-2-ulosonate + CTP = CMP-3-deoxy-beta-D-manno-octulosonate + diphosphate. The protein operates within nucleotide-sugar biosynthesis; CMP-3-deoxy-D-manno-octulosonate biosynthesis; CMP-3-deoxy-D-manno-octulosonate from 3-deoxy-D-manno-octulosonate and CTP: step 1/1. Its pathway is bacterial outer membrane biogenesis; lipopolysaccharide biosynthesis. Activates KDO (a required 8-carbon sugar) for incorporation into bacterial lipopolysaccharide in Gram-negative bacteria. This chain is 3-deoxy-manno-octulosonate cytidylyltransferase, found in Salmonella enteritidis PT4 (strain P125109).